The sequence spans 32 residues: Tail virion protein G9P (32 aa).

The helical transmembrane segment at 8 to 24 (FASFVLGWCLRSGITYF) threads the bilayer.

This sequence belongs to the inovirus G9P protein family.

The protein localises to the virion. It localises to the host membrane. May initiate with G7P the virion concomitant assembly-budding process, by interacting with the packaging signal of the viral genome. The assembly-budding takes place at the host inner membrane. In turn, G7P and G9P are present at the end of the filamentous virion that emerges first from the bacterial host. The protein is Tail virion protein G9P (IX) of Escherichia coli (Bacteriophage f1).